Reading from the N-terminus, the 485-residue chain is P2X purinoceptor 2 (485 aa).

Topologically, residues 1-43 (MAAAQPRLPAGAAMVRRLARGCWSAFWDYETPKVIVVRNRRLG) are cytoplasmic. 6 disulfide bridges follow: C22–C443, C126–C177, C137–C160, C143–C171, C227–C237, and C271–C280. The chain crosses the membrane as a helical span at residues 44–64 (FVHRMVQLLILLYFVWYVFIV). At 65–339 (QKSYQDSETG…IVHGQAGKFS (275 aa)) the chain is on the extracellular side. Positions 82 and 84 each coordinate ATP. N-linked (GlcNAc...) asparagine glycosylation is present at N195. Residue T197 participates in ATP binding. N-linked (GlcNAc...) asparagine glycosylation is present at N252. ATP is bound by residues S297, N301, and R303. Residue N311 is glycosylated (N-linked (GlcNAc...) asparagine). K321 serves as a coordination point for ATP. The interval 322-335 (AYGIRIDVIVHGQA) is pore-forming motif. The chain crosses the membrane as a helical span at residues 340–360 (LIPTIINLATALTSIGVGSFL). Residues 361-485 (CDWILLTFMN…STDPKGLAQL (125 aa)) are Cytoplasmic-facing. Residues 406 to 485 (PPPSHYSQDQ…STDPKGLAQL (80 aa)) are disordered. The span at 420-436 (PSGEGPALGEGAELPLA) shows a compositional bias: low complexity. Polar residues predominate over residues 469–478 (PSQQDSTSTD).

This sequence belongs to the P2X receptor family. Homotrimer and heterotrimer; functional P2XRs are organized as homomeric and heteromeric trimers. Homotrimer. Forms heterotrimer with P2XR1. Forms heterotrimer with P2XR3. Forms heterotrimer with P2XR6.

Its subcellular location is the cell membrane. It catalyses the reaction Ca(2+)(in) = Ca(2+)(out). The catalysed reaction is K(+)(in) = K(+)(out). It carries out the reaction Na(+)(in) = Na(+)(out). Its activity is regulated as follows. Fast activation by external ATP. Exhibits slow desensitization during prolonged ATP activation. Not sensitive to the ATP agonist:alpha/beta-methylene-ATP. Functionally, ATP-gated nonselective transmembrane cation channel permeable to potassium, sodium and calcium. Activation by extracellular ATP induces a variety of cellular responses, such as excitatory postsynaptic responses in sensory neurons, neuromuscular junctions (NMJ) formation, hearing, perception of taste and peristalsis. In the inner ear, regulates sound transduction and auditory neurotransmission, outer hair cell electromotility, inner ear gap junctions, and K(+) recycling. Mediates synaptic transmission between neurons and from neurons to smooth muscle. The chain is P2X purinoceptor 2 (P2rx2) from Mus musculus (Mouse).